Here is a 267-residue protein sequence, read N- to C-terminus: 14-3-3-like protein GF14 chi (267 aa).

An N-acetylalanine modification is found at alanine 2. Serine 72 and serine 195 each carry phosphoserine. A Phosphothreonine modification is found at threonine 216. Residue serine 267 is modified to Phosphoserine.

Belongs to the 14-3-3 family. In terms of assembly, interacts with TPK1. Interacts with the isocitrate dehydrogenase IDH3, and malate dehydrogenases MDH1 and MDH2. Interacts with DREB1A and DREB1B in the nucleus. Interacts with CINV1.

It localises to the nucleus. Its subcellular location is the cytoplasm. In terms of biological role, is associated with a DNA binding complex that binds to the G box, a well-characterized cis-acting DNA regulatory element found in plant genes. Involved in the regulation of nutrient metabolism. The sequence is that of 14-3-3-like protein GF14 chi (GRF1) from Arabidopsis thaliana (Mouse-ear cress).